The chain runs to 718 residues: MVSIRRSFEAYVDDMNIITVLIPAEQKEIMTPPFRLETEITDFPLAVREEYSLEAKYKYVCVSDHPVTFGKIHCVRASSGHKTDLQIGAVIRTAAFDDEFYYDGELGAVYTADHTVFKVWAPAATSAAVKLSHPNKSGRTFQMTRLEKGVYAVTVTGDLHGYEYLFCICNNSEWMETVDQYAKAVTVNGEKGVVLRPDQMKWTAPLKPFSHPVDAVIYETHLRDFSIHENSGMINKGKYLALTETDTQTANGSSSGLAYVKELGVTHVELLPVNDFAGVDEEKPLDAYNWGYNPLHFFAPEGSYASNPHDPQTRKTELKQMINTLHQHGLRVILDVVFNHVYKRENSPFEKTVPGYFFRHDECGMPSNGTGVGNDIASERRMARKFIADCVVYWLEEYNVDGFRFDLLGILDIDTVLYMKEKATKAKPGILLFGEGWDLATPLPHEQKAALANAPRMPGIGFFNDMFRDAVKGNTFHLKATGFALGNGESAQAVMHGIAGSSGWKALAPIVPEPSQSINYVESHDNHTFWDKMSFALPQENDSRKRSRQRLAAAIILLAQGVPFIHSGQEFFRTKQGVENSYQSSDSINQLDWDRRETFKEDVHYIRRLISLRKAHPAFRLRSAADIQRHLECLTLKEHLIAYRLYDLDEVDEWKDIIVIHHASPDSVEWRLPNDIPYRLLCDPSGFQEDPTEIKKTVAVNGIGTVILYLASDLKSFA.

The active-site Nucleophile is the Asp406. Residue Glu435 is the Proton donor of the active site.

Belongs to the glycosyl hydrolase 13 family.

It catalyses the reaction Hydrolysis of (1-&gt;6)-alpha-D-glucosidic linkages in pullulan, amylopectin and glycogen, and in the alpha- and beta-limit dextrins of amylopectin and glycogen.. This chain is Pullulanase (amyX), found in Bacillus subtilis (strain 168).